Consider the following 354-residue polypeptide: MRSPGIVLLLLLLLLLPPGAAPCPADLCPAPPRVNVSLDAAPAARWLPVLRLFDPGLLRAAVARIVGDRVPKWRDVIGKLVAEMESFLPQPYTKEIRGISDFLNLSLADGFIVNLAYEASAFCTSVVAQDSRGHIYHGRNLDYPFGDLLRKMTVDVQFLKNGQIAFTGTTFIGYVGLWTGQSPYKFTVSGDERDKGWWWENMIAALFQGHSPVSWLIRTTLSESEDFEASVYKLAKTPLIADVYYIVGGTAPGEGVVVTRNRGGPADIWPLDPLNGAWFRVETNYDHWKPVPKSDDRRTPAIKALNATGQANLSLEALFQVLSVVPVCNKITVYTTVMSAATPDKYMTRIRNLS.

A signal peptide spans 1–22 (MRSPGIVLLLLLLLLLPPGAAP). N-linked (GlcNAc...) asparagine glycosylation is found at N35 and N104. The Nucleophile role is filled by C123. Residues N306, N312, and N352 are each glycosylated (N-linked (GlcNAc...) asparagine).

The protein belongs to the acid ceramidase family. Heterodimer of an alpha and a beta subunit, produced by autocatalytic cleavage. Post-translationally, N-glycosylated. Tunicamycin treatment causes a reduction in specific activity against N-palmitoylethanolamine. In terms of processing, autoproteolytic cleavage at pH 4.5 gives rise to the alpha and beta subunit. Cleavage gives rise to a conformation change that activates the enzyme. The same catalytic Cys residue mediates the autoproteolytic cleavage and subsequent hydrolysis of lipid substrates.

The protein resides in the lysosome. Its subcellular location is the membrane. It carries out the reaction N-hexadecanoylethanolamine + H2O = ethanolamine + hexadecanoate. The enzyme catalyses an N-(long-chain fatty acyl)ethanolamine + H2O = a long-chain fatty acid + ethanolamine. It catalyses the reaction N-dodecanoylethanolamine + H2O = dodecanoate + ethanolamine. The catalysed reaction is N-tetradecanoylethanolamine + H2O = tetradecanoate + ethanolamine. It carries out the reaction an N-acylsphing-4-enine + H2O = sphing-4-enine + a fatty acid. The enzyme catalyses N-hexadecanoylsphing-4-enine + H2O = sphing-4-enine + hexadecanoate. It catalyses the reaction N-dodecanoylsphing-4-enine + H2O = dodecanoate + sphing-4-enine. It functions in the pathway lipid metabolism; fatty acid metabolism. Degrades bioactive fatty acid amides to their corresponding acids, with the following preference: N-palmitoylethanolamine &gt; N-myristoylethanolamine &gt; N-stearoylethanolamine &gt; N-oleoylethanolamine &gt; N-linoleoylethanolamine &gt; N-arachidonoylethanolamine. The sequence is that of N-acylethanolamine-hydrolyzing acid amidase from Cavia porcellus (Guinea pig).